The following is a 376-amino-acid chain: Alpha-2,8-sialyltransferase 8E (376 aa).

Over 1–17 (MRYADPSANRDLLGSRT) the chain is Cytoplasmic. A helical; Signal-anchor for type II membrane protein transmembrane segment spans residues 18–38 (LLFIFICAFALVTLLQQILYG). The Lumenal portion of the chain corresponds to 39 to 376 (RNYIKRYFEF…RVHTGTCSCC (338 aa)). N-linked (GlcNAc...) asparagine glycans are attached at residues Asn-56 and Asn-96. 2 disulfide bridges follow: Cys-164/Cys-313 and Cys-178/Cys-373. Residues Asn-192 and 214–216 (NPS) contribute to the substrate site. Asn-241 and Asn-284 each carry an N-linked (GlcNAc...) asparagine glycan. Substrate is bound at residue 300–302 (STG). His-348 acts as the Proton donor/acceptor in catalysis.

This sequence belongs to the glycosyltransferase 29 family. Expressed in fetal and adult brain, adult heart and skeletal muscle. In terms of tissue distribution, expressed in fetal and adult brain, not detected in adult heart and skeletal muscle.

It localises to the golgi apparatus membrane. It catalyses the reaction a ganglioside GT1b (d18:1(4E)) + CMP-N-acetyl-beta-neuraminate = a ganglioside GQ1b (d18:1(4E)) + CMP + H(+). The catalysed reaction is a ganglioside GD3 (d18:1(4E)) + CMP-N-acetyl-beta-neuraminate = a ganglioside GT3 (d18:1(4E)) + CMP + H(+). It carries out the reaction a ganglioside GD1a (d18:1(4E)) + CMP-N-acetyl-beta-neuraminate = a ganglioside GT1a (d18:1(4E)) + CMP + H(+). The enzyme catalyses a ganglioside GM1b (d18:1(4E)) + CMP-N-acetyl-beta-neuraminate = a ganglioside GD1c (d18:1(4E)) + CMP + H(+). It catalyses the reaction a ganglioside GQ1c (d18:1(4E)) + CMP-N-acetyl-beta-neuraminate = a ganglioside GP1c (d18:1(4E)) + CMP + H(+). Its pathway is protein modification; protein glycosylation. In terms of biological role, involved in the synthesis of gangliosides GD1c, GT1a, GQ1b, GP1c and GT3 from GD1a, GT1b, GM1b and GD3 respectively. This is Alpha-2,8-sialyltransferase 8E from Homo sapiens (Human).